Reading from the N-terminus, the 296-residue chain is Nucleotide-binding protein RSc0403 (296 aa).

Residue 8-15 participates in ATP binding; it reads GMSGSGKS. 57 to 60 lines the GTP pocket; the sequence is DIRS. The disordered stretch occupies residues 99-124; sequence TRRRHPLSIRNGRPDAGNPPSAAKGP.

It belongs to the RapZ-like family.

Functionally, displays ATPase and GTPase activities. The protein is Nucleotide-binding protein RSc0403 of Ralstonia nicotianae (strain ATCC BAA-1114 / GMI1000) (Ralstonia solanacearum).